A 419-amino-acid chain; its full sequence is Putative nickel insertion protein (419 aa).

Residues 69-90 (HDPSNHPSQNTHHHHHHHTRHL) form a disordered region. Basic residues predominate over residues 79–88 (THHHHHHHTR).

Belongs to the LarC family.

The protein is Putative nickel insertion protein of Rippkaea orientalis (strain PCC 8801 / RF-1) (Cyanothece sp. (strain PCC 8801)).